Here is a 199-residue protein sequence, read N- to C-terminus: 7-methyl-GTP pyrophosphatase (199 aa).

The Proton acceptor role is filled by Asp76.

This sequence belongs to the Maf family. YceF subfamily. The cofactor is a divalent metal cation.

Its subcellular location is the cytoplasm. It catalyses the reaction N(7)-methyl-GTP + H2O = N(7)-methyl-GMP + diphosphate + H(+). In terms of biological role, nucleoside triphosphate pyrophosphatase that hydrolyzes 7-methyl-GTP (m(7)GTP). May have a dual role in cell division arrest and in preventing the incorporation of modified nucleotides into cellular nucleic acids. The protein is 7-methyl-GTP pyrophosphatase of Mesorhizobium japonicum (strain LMG 29417 / CECT 9101 / MAFF 303099) (Mesorhizobium loti (strain MAFF 303099)).